The primary structure comprises 273 residues: ATP synthase subunit a (273 aa).

7 helical membrane-spanning segments follow: residues 34–54 (IINMDTIFWSIFAGVVGCLFM), 94–114 (FIAPLALTVFVWVALMNSLDF), 115–135 (LPVDMFSAFFHAVGLDSLITH), 143–163 (DLNGTMGIALGVFALMIFYNI), 171–191 (FVHELFAAPFGIWLAPFNLLL), 218–238 (FLLIALLGSTATAFGFFGHVV), and 244–264 (AIFHILIVFLQAFIFMMLTLV).

This sequence belongs to the ATPase A chain family. In terms of assembly, F-type ATPases have 2 components, CF(1) - the catalytic core - and CF(0) - the membrane proton channel. CF(1) has five subunits: alpha(3), beta(3), gamma(1), delta(1), epsilon(1). CF(0) has three main subunits: a(1), b(2) and c(9-12). The alpha and beta chains form an alternating ring which encloses part of the gamma chain. CF(1) is attached to CF(0) by a central stalk formed by the gamma and epsilon chains, while a peripheral stalk is formed by the delta and b chains.

It is found in the cell inner membrane. In terms of biological role, key component of the proton channel; it plays a direct role in the translocation of protons across the membrane. In Janthinobacterium sp. (strain Marseille) (Minibacterium massiliensis), this protein is ATP synthase subunit a.